A 106-amino-acid polypeptide reads, in one-letter code: ATP-dependent Clp protease adapter protein ClpS (106 aa).

The protein belongs to the ClpS family. As to quaternary structure, binds to the N-terminal domain of the chaperone ClpA.

Its function is as follows. Involved in the modulation of the specificity of the ClpAP-mediated ATP-dependent protein degradation. In Escherichia fergusonii (strain ATCC 35469 / DSM 13698 / CCUG 18766 / IAM 14443 / JCM 21226 / LMG 7866 / NBRC 102419 / NCTC 12128 / CDC 0568-73), this protein is ATP-dependent Clp protease adapter protein ClpS.